The chain runs to 388 residues: Mitochondrial distribution and morphology protein 12 (388 aa).

The SMP-LTD domain maps to 1 to 388; the sequence is MSLDINWSLL…VFPNFHTVAL (388 aa). Disordered regions lie at residues 75–101 and 209–251; these read DDEG…RNEA and PMSI…SSSS. The segment covering 83–101 has biased composition (basic and acidic residues); the sequence is EEKQREKEREERDKLRNEA. The segment covering 234–243 has biased composition (pro residues); that stretch reads PSPPAHPAGL.

The protein belongs to the MDM12 family. As to quaternary structure, component of the ER-mitochondria encounter structure (ERMES) or MDM complex, composed of MMM1, MDM10, MDM12 and MDM34. An MMM1 homodimer associates with one molecule of MDM12 on each side in a pairwise head-to-tail manner, and the SMP-LTD domains of MMM1 and MDM12 generate a continuous hydrophobic tunnel for phospholipid trafficking.

It is found in the mitochondrion outer membrane. It localises to the endoplasmic reticulum membrane. Component of the ERMES/MDM complex, which serves as a molecular tether to connect the endoplasmic reticulum (ER) and mitochondria. Components of this complex are involved in the control of mitochondrial shape and protein biogenesis, and function in nonvesicular lipid trafficking between the ER and mitochondria. MDM12 is required for the interaction of the ER-resident membrane protein MMM1 and the outer mitochondrial membrane-resident beta-barrel protein MDM10. The MDM12-MMM1 subcomplex functions in the major beta-barrel assembly pathway that is responsible for biogenesis of all mitochondrial outer membrane beta-barrel proteins, and acts in a late step after the SAM complex. The MDM10-MDM12-MMM1 subcomplex further acts in the TOM40-specific pathway after the action of the MDM12-MMM1 complex. Essential for establishing and maintaining the structure of mitochondria and maintenance of mtDNA nucleoids. The sequence is that of Mitochondrial distribution and morphology protein 12 from Cryptococcus neoformans var. neoformans serotype D (strain B-3501A) (Filobasidiella neoformans).